Here is a 454-residue protein sequence, read N- to C-terminus: 3-phosphoshikimate 1-carboxyvinyltransferase (454 aa).

The disordered stretch occupies residues 1–31 (MSENHSEGASRPVISRRPAAGLRADHPVHVP). Positions 34, 35, and 39 each coordinate 3-phosphoshikimate. Lysine 34 lines the phosphoenolpyruvate pocket. 2 residues coordinate phosphoenolpyruvate: glycine 107 and arginine 135. Serine 180, glutamine 182, aspartate 334, and lysine 361 together coordinate 3-phosphoshikimate. Residue glutamine 182 participates in phosphoenolpyruvate binding. The active-site Proton acceptor is aspartate 334. Arginine 365 and arginine 409 together coordinate phosphoenolpyruvate.

Belongs to the EPSP synthase family. In terms of assembly, monomer.

It is found in the cytoplasm. The enzyme catalyses 3-phosphoshikimate + phosphoenolpyruvate = 5-O-(1-carboxyvinyl)-3-phosphoshikimate + phosphate. Its pathway is metabolic intermediate biosynthesis; chorismate biosynthesis; chorismate from D-erythrose 4-phosphate and phosphoenolpyruvate: step 6/7. Catalyzes the transfer of the enolpyruvyl moiety of phosphoenolpyruvate (PEP) to the 5-hydroxyl of shikimate-3-phosphate (S3P) to produce enolpyruvyl shikimate-3-phosphate and inorganic phosphate. In Granulibacter bethesdensis (strain ATCC BAA-1260 / CGDNIH1), this protein is 3-phosphoshikimate 1-carboxyvinyltransferase.